A 497-amino-acid polypeptide reads, in one-letter code: Probable malate:quinone oxidoreductase (497 aa).

The protein belongs to the MQO family. Requires FAD as cofactor.

It carries out the reaction (S)-malate + a quinone = a quinol + oxaloacetate. The protein operates within carbohydrate metabolism; tricarboxylic acid cycle; oxaloacetate from (S)-malate (quinone route): step 1/1. The protein is Probable malate:quinone oxidoreductase of Rhodopseudomonas palustris (strain ATCC BAA-98 / CGA009).